The primary structure comprises 419 residues: 3-isopropylmalate dehydratase large subunit (419 aa).

[4Fe-4S] cluster-binding residues include Cys-300, Cys-360, and Cys-363.

Belongs to the aconitase/IPM isomerase family. LeuC type 2 subfamily. As to quaternary structure, heterodimer of LeuC and LeuD. The cofactor is [4Fe-4S] cluster.

It catalyses the reaction (2R,3S)-3-isopropylmalate = (2S)-2-isopropylmalate. It participates in amino-acid biosynthesis; L-leucine biosynthesis; L-leucine from 3-methyl-2-oxobutanoate: step 2/4. Its function is as follows. Catalyzes the isomerization between 2-isopropylmalate and 3-isopropylmalate, via the formation of 2-isopropylmaleate. This chain is 3-isopropylmalate dehydratase large subunit, found in Clostridium beijerinckii (strain ATCC 51743 / NCIMB 8052) (Clostridium acetobutylicum).